The primary structure comprises 415 residues: Small ribosomal subunit protein uS5m (415 aa).

The tract at residues 1–31 (MRRSGPELWKTLTSVSKSGQKKGRRNTRQPV) is disordered. Positions 131-197 (FETYCLEVKR…GMASRKIFHV (67 aa)) constitute an S5 DRBM domain. Residues 396-415 (GVEPMPLGIGLSHVVPKKDD) are disordered.

The protein belongs to the universal ribosomal protein uS5 family. In terms of assembly, component of the mitochondrial ribosome small subunit (28S) which comprises a 12S rRNA and about 30 distinct proteins.

Its subcellular location is the mitochondrion. This chain is Small ribosomal subunit protein uS5m (mrps-5), found in Caenorhabditis briggsae.